Reading from the N-terminus, the 305-residue chain is NK1 transcription factor-related protein 2 (305 aa).

2 disordered regions span residues 51–158 and 210–257; these read EEVE…KPRR and KWKK…PGAL. The segment covering 87 to 96 has biased composition (acidic residues); sequence SEAEEEEEAE. Basic and acidic residues predominate over residues 97–115; that stretch reads DAGRAHQPERWQGVHEGSP. Residues 129 to 140 show a composition bias toward low complexity; it reads AEGLPASPGSPG. Residues 156–215 constitute a DNA-binding region (homeobox); it reads PRRARTAFTYEQLVALENKFRATRYLSVCERLNLALSLSLTETQVKIWFQNRRTKWKKQN.

This sequence belongs to the NK-1 homeobox family. Interacts (via the homeodomain) with HIPK1, HIPK2, and HIPK3. Post-translationally, phosphorylated by HIPK2 in vitro. Expression detected in the brain, testis and spleen. In the testis, expressed in the germ cells of the seminiferous epithelium, predominantly in elongating spermatids and spermatozoa. Expressed throughout the brain with highest levels in regions of the cerebral cortex, hippocampus, diencephalon, pons, medulla and cerebellum.

Its subcellular location is the nucleus. The protein resides in the nucleolus. In terms of biological role, transcriptional repressor. May play a role in early development as a Wnt/beta-catenin effector, hence controlling pluripotency and preimplantation development of embryonic stem cells. May promote adipogenesis in mesenchymal stem cells, possibly by inhibiting the expression of the antiadipogenic factor NR2F2. May inhibit osteoblastogenic differentiation. The chain is NK1 transcription factor-related protein 2 (Nkx1-2) from Mus musculus (Mouse).